A 156-amino-acid polypeptide reads, in one-letter code: Small ribosomal subunit protein uS7 (156 aa).

The protein belongs to the universal ribosomal protein uS7 family. In terms of assembly, part of the 30S ribosomal subunit. Contacts proteins S9 and S11.

In terms of biological role, one of the primary rRNA binding proteins, it binds directly to 16S rRNA where it nucleates assembly of the head domain of the 30S subunit. Is located at the subunit interface close to the decoding center, probably blocks exit of the E-site tRNA. The chain is Small ribosomal subunit protein uS7 from Nitratiruptor sp. (strain SB155-2).